The chain runs to 2254 residues: Voltage-dependent T-type calcium channel subunit alpha-1G (2254 aa).

A disordered region spans residues 1–48 (MDEEEDGAGAEESGQPRSFTQLNDLSGAGGRQGPGSTEKDPGSADSEA). Residues 1 to 80 (MDEEEDGAGA…RSWCLRTVCN (80 aa)) are Cytoplasmic-facing. The segment covering 15–24 (QPRSFTQLND) has biased composition (polar residues). One copy of the I repeat lies at 68–398 (SRPRSWCLRT…LCLVVIATQF (331 aa)). Residues 81–101 (PWFERVSMLVILLNCVTLGMF) form a helical membrane-spanning segment. The Extracellular segment spans residues 102 to 119 (RPCEDIACDSQRCRILQA). A helical transmembrane segment spans residues 120 to 141 (FDDFIFAFFAVEMVVKMVALGI). Topologically, residues 142–150 (FGKKCYLGD) are cytoplasmic. A helical transmembrane segment spans residues 151-170 (TWNRLDFFIVIAGMLEYSLD). Residues 171–175 (LQNVS) lie on the Extracellular side of the membrane. Residue asparagine 173 is glycosylated (N-linked (GlcNAc...) asparagine). The helical transmembrane segment at 176-193 (FSAVRTVRVLRPLRAINR) threads the bilayer. At 194–213 (VPSMRILVTLLLDTLPMLGN) the chain is on the cytoplasmic side. A helical transmembrane segment spans residues 214 to 234 (VLLLCFFVFFIFGIVGVQLWA). The Extracellular portion of the chain corresponds to 235–370 (GLLRNRCFLP…YFVMDAHSFY (136 aa)). N-linked (GlcNAc...) asparagine glycans are attached at residues asparagine 246, asparagine 306, asparagine 310, and asparagine 322. The helical transmembrane segment at 371 to 395 (NFIYFILLIIVGSFFMINLCLVVIA) threads the bilayer. Topologically, residues 396-744 (TQFSETKQRE…DTFRKIVDSK (349 aa)) are cytoplasmic. The residue at position 467 (serine 467) is a Phosphoserine. Over residues 494-506 (LVHHHHHHHHHYH) the composition is skewed to basic residues. Disordered stretches follow at residues 494–513 (LVHH…GTLR), 525–553 (DANG…AESV), 579–598 (ASGR…TSPP), and 699–721 (DAQH…GPDA). Residues 534–545 (LPPPSTPTPSGG) are compositionally biased toward pro residues. Serine 716 is subject to Phosphoserine. Residues 730–968 (WRLICDTFRK…LLVAILVEGF (239 aa)) form an II repeat. The chain crosses the membrane as a helical span at residues 745 to 765 (YFGRGIMIAILVNTLSMGIEY). Over 766-778 (HEQPEELTNALEI) the chain is Extracellular. The helical transmembrane segment at 779–800 (SNIVFTSLFALEMLLKLLVYGP) threads the bilayer. Topologically, residues 801-806 (FGYIKN) are cytoplasmic. The helical transmembrane segment at 807 to 825 (PYNIFDGVIVVISVWEIVG) threads the bilayer. Over 826–833 (QQGGGLSV) the chain is Extracellular. The chain crosses the membrane as a helical span at residues 834–857 (LRTFRLMRVLKLVRFLPALQRQLV). At 858-868 (VLMKTMDNVAT) the chain is on the cytoplasmic side. A helical transmembrane segment spans residues 869–889 (FCMLLMLFIFIFSILGMHLFG). The Extracellular portion of the chain corresponds to 890-940 (CKFASERDGDTLPDRKNFDSLLWAIVTVFQILTQEDWNKVLYNGMASTSSW). Residues 941-965 (AALYFIALMTFGNYVLFNLLVAILV) traverse the membrane as a helical segment. At 966 to 1251 (EGFQAEGDAT…SRFRLLCHRI (286 aa)) the chain is on the cytoplasmic side. Positions 1024–1209 (TPMSHPKSSS…GDDDNDEGNL (186 aa)) are disordered. 2 stretches are compositionally biased toward low complexity: residues 1041–1052 (GSGSRRTSSSGS) and 1065–1091 (PPSA…SRNS). Composition is skewed to acidic residues over residues 1117-1126 (ESQDEEESSE) and 1196-1206 (PQLDGDDDNDE). Residues serine 1118, serine 1124, and serine 1125 each carry the phosphoserine modification. One copy of the III repeat lies at 1242 to 1519 (SRFRLLCHRI…MFVGVVVENF (278 aa)). A helical membrane pass occupies residues 1252–1274 (ITHKMFDHVVLVIIFLNCITIAM). Over 1275-1292 (ERPKIDPHSAERIFLTLS) the chain is Extracellular. The chain crosses the membrane as a helical span at residues 1293 to 1313 (NYIFTAVFLAEMTVKVVALGW). Residues 1314–1323 (CFGEQAYLRS) lie on the Cytoplasmic side of the membrane. Residues 1324–1343 (SWNVLDGLLVLISVIDILVS) traverse the membrane as a helical segment. Topologically, residues 1344–1357 (MVSDSGTKILGMLR) are extracellular. A helical transmembrane segment spans residues 1358-1379 (VLRLLRTLRPLRVISRAQGLKL). Over 1380–1389 (VVETLMSSLK) the chain is Cytoplasmic. Residues 1390 to 1413 (PIGNIVVICCAFFIIFGILGVQLF) traverse the membrane as a helical segment. Residues 1414-1490 (KGKFFVCQGE…DQQPIMNHNP (77 aa)) are Extracellular-facing. N-linked (GlcNAc...) asparagine glycosylation is found at asparagine 1427 and asparagine 1430. The helical transmembrane segment at 1491–1516 (WMLLYFISFLLIVAFFVLNMFVGVVV) threads the bilayer. Topologically, residues 1517–1578 (ENFHKCRQHQ…RLLVHHLCTS (62 aa)) are cytoplasmic. Residues 1564 to 1822 (DYSRFRLLVH…VVIAVLMKHL (259 aa)) form an IV repeat. A helical membrane pass occupies residues 1579–1599 (HYLDLFITGVIGLNVVTMAME). Residues 1600-1613 (HYQQPQILDEALKI) lie on the Extracellular side of the membrane. Residues 1614–1635 (CNYIFTVIFVFESVFKLVAFGF) traverse the membrane as a helical segment. Residues 1636–1642 (RRFFQDR) lie on the Cytoplasmic side of the membrane. Residues 1643–1661 (WNQLDLAIVLLSIMGITLE) form a helical membrane-spanning segment. At 1662 to 1675 (EIEVNLSLPINPTI) the chain is on the extracellular side. Asparagine 1666 is a glycosylation site (N-linked (GlcNAc...) asparagine). A helical membrane pass occupies residues 1676-1699 (IRIMRVLRIARVLKLLKMAVGMRA). Residues 1700–1713 (LLHTVMQALPQVGN) lie on the Cytoplasmic side of the membrane. A helical transmembrane segment spans residues 1714 to 1734 (LGLLFMLLFFIFAALGVELFG). The Extracellular portion of the chain corresponds to 1735-1794 (DLECDETHPCEGLGRHATFRNFGMAFLTLFRVSTGDNWNGIMKDTLRDCDQESTCYNTVI). The helical transmembrane segment at 1795-1822 (SPIYFVSFVLTAQFVLVNVVIAVLMKHL) threads the bilayer. Residues 1823-2254 (EESNKEAKEE…LSSDPTDMDP (432 aa)) lie on the Cytoplasmic side of the membrane. The disordered stretch occupies residues 2153–2254 (DSGSQPRLCP…LSSDPTDMDP (102 aa)). Positions 2184–2193 (SPPSISIDPP) are enriched in low complexity. 2 stretches are compositionally biased toward polar residues: residues 2220–2232 (PSVS…TAAS) and 2240–2254 (LSLS…DMDP).

The protein belongs to the calcium channel alpha-1 subunit (TC 1.A.1.11) family. CACNA1G subfamily. In terms of processing, in response to raising of intracellular calcium, the T-type channels are activated by CaM-kinase II. Highly expressed in brain. Moderate expression in heart; low expression in placenta, kidney and lung.

The protein localises to the cell membrane. It localises to the cytoplasm. It catalyses the reaction Ca(2+)(in) = Ca(2+)(out). Voltage-sensitive calcium channels (VSCC) mediate the entry of calcium ions into excitable cells and are also involved in a variety of calcium-dependent processes, including muscle contraction, hormone or neurotransmitter release, gene expression, cell motility, cell division and cell death. The isoform alpha-1G gives rise to T-type calcium currents. T-type calcium channels belong to the 'low-voltage activated (LVA)' group and are strongly blocked by nickel and mibefradil. A particularity of this type of channels is an opening at quite negative potentials and a voltage-dependent inactivation. T-type channels serve pacemaking functions in both central neurons and cardiac nodal cells and support calcium signaling in secretory cells and vascular smooth muscle. They may also be involved in the modulation of firing patterns of neurons which is important for information processing as well as in cell growth processes. This is Voltage-dependent T-type calcium channel subunit alpha-1G (Cacna1g) from Rattus norvegicus (Rat).